The primary structure comprises 274 residues: Orotidine 5'-phosphate decarboxylase (274 aa).

Low complexity predominate over residues methionine 1–alanine 15. The disordered stretch occupies residues methionine 1 to proline 21. Substrate-binding positions include aspartate 32, lysine 54, aspartate 99–threonine 108, threonine 154, arginine 215, glutamine 224, glycine 244, and arginine 245. Catalysis depends on lysine 101, which acts as the Proton donor.

It belongs to the OMP decarboxylase family. Type 1 subfamily. In terms of assembly, homodimer.

It carries out the reaction orotidine 5'-phosphate + H(+) = UMP + CO2. The protein operates within pyrimidine metabolism; UMP biosynthesis via de novo pathway; UMP from orotate: step 2/2. Its function is as follows. Catalyzes the decarboxylation of orotidine 5'-monophosphate (OMP) to uridine 5'-monophosphate (UMP). This is Orotidine 5'-phosphate decarboxylase from Frankia casuarinae (strain DSM 45818 / CECT 9043 / HFP020203 / CcI3).